The primary structure comprises 667 residues: DNA ligase (667 aa).

Residues 32–36 (DSEYD), 81–82 (SL), and glutamate 110 each bind NAD(+). Lysine 112 (N6-AMP-lysine intermediate) is an active-site residue. Positions 133, 167, 283, and 307 each coordinate NAD(+). The Zn(2+) site is built by cysteine 401, cysteine 404, cysteine 419, and cysteine 424. One can recognise a BRCT domain in the interval 586-667 (EGHPEFSGKT…FVDKQNELNS (82 aa)).

The protein belongs to the NAD-dependent DNA ligase family. LigA subfamily. Mg(2+) is required as a cofactor. Mn(2+) serves as cofactor.

The enzyme catalyses NAD(+) + (deoxyribonucleotide)n-3'-hydroxyl + 5'-phospho-(deoxyribonucleotide)m = (deoxyribonucleotide)n+m + AMP + beta-nicotinamide D-nucleotide.. Functionally, DNA ligase that catalyzes the formation of phosphodiester linkages between 5'-phosphoryl and 3'-hydroxyl groups in double-stranded DNA using NAD as a coenzyme and as the energy source for the reaction. It is essential for DNA replication and repair of damaged DNA. This is DNA ligase from Staphylococcus aureus (strain Mu3 / ATCC 700698).